The primary structure comprises 529 residues: MASNNLNVLNALDTAHTQWYHVTAVVIAGMGFFTDAYDLFCISTISKLLGRLYYYDPHTHAPGKLPHTVNNWVTGVALVGTLTGQLVFGWLGDKLGRKKVYGLTLILMVICALSSGLSFGYSRKVVIGTLCFFRFWLGFGIGGDYPLSATIMSEYANKRTRGAFIAAVFAMQGVGIIFAGLVLMTVSKVFLMRYAGKAFSTDEVFSTEPEADYVWRIVLMLGALPALLTYYWRMKMPETGRYTAIIEGNAKQAAIDMGKVLEIEIQAEGEKLAKFKSANDYSLLSNEFFQRHGLHLIGTMSTWFLLDIAFYSQNLTQKDIFPTMGLVSDAKSISALREMFETSRAMFVIALLGTFPGYWFTVFFIEKIGRFKIQLMGFFMMSIFMAIIGVRYDYLKTKDHKWTFAALYGLTFFFANSGPNSTTFVLPAELFPTRVRSTCHALSAASGKAGAMVSAFGVQQYTQDGEVHKIKKAMLFLAFTNMVGFCCTFLVTETKGRSLEEISGEDENQNETKMKGRPVSGGHQDDGWD.

The Cytoplasmic portion of the chain corresponds to 1–21; sequence MASNNLNVLNALDTAHTQWYH. Residues 22 to 42 form a helical membrane-spanning segment; the sequence is VTAVVIAGMGFFTDAYDLFCI. Topologically, residues 43 to 71 are extracellular; it reads STISKLLGRLYYYDPHTHAPGKLPHTVNN. Residues 72–92 form a helical membrane-spanning segment; it reads WVTGVALVGTLTGQLVFGWLG. Residues 93–99 are Cytoplasmic-facing; sequence DKLGRKK. Residues 100–120 traverse the membrane as a helical segment; that stretch reads VYGLTLILMVICALSSGLSFG. Topologically, residues 121–124 are extracellular; that stretch reads YSRK. A helical membrane pass occupies residues 125–145; the sequence is VVIGTLCFFRFWLGFGIGGDY. Topologically, residues 146-163 are cytoplasmic; sequence PLSATIMSEYANKRTRGA. The helical transmembrane segment at 164–184 threads the bilayer; the sequence is FIAAVFAMQGVGIIFAGLVLM. Over 185–211 the chain is Extracellular; sequence TVSKVFLMRYAGKAFSTDEVFSTEPEA. Residues 212–232 traverse the membrane as a helical segment; the sequence is DYVWRIVLMLGALPALLTYYW. At 233-291 the chain is on the cytoplasmic side; it reads RMKMPETGRYTAIIEGNAKQAAIDMGKVLEIEIQAEGEKLAKFKSANDYSLLSNEFFQR. The chain crosses the membrane as a helical span at residues 292–312; sequence HGLHLIGTMSTWFLLDIAFYS. Over 313-344 the chain is Extracellular; the sequence is QNLTQKDIFPTMGLVSDAKSISALREMFETSR. A glycan (N-linked (GlcNAc...) asparagine) is linked at asparagine 314. Residues 345–365 form a helical membrane-spanning segment; that stretch reads AMFVIALLGTFPGYWFTVFFI. At 366–374 the chain is on the cytoplasmic side; the sequence is EKIGRFKIQ. Residues 375–395 form a helical membrane-spanning segment; sequence LMGFFMMSIFMAIIGVRYDYL. Topologically, residues 396–405 are extracellular; that stretch reads KTKDHKWTFA. The chain crosses the membrane as a helical span at residues 406-426; sequence ALYGLTFFFANSGPNSTTFVL. The Cytoplasmic segment spans residues 427–472; that stretch reads PAELFPTRVRSTCHALSAASGKAGAMVSAFGVQQYTQDGEVHKIKK. Residues 473-493 form a helical membrane-spanning segment; that stretch reads AMLFLAFTNMVGFCCTFLVTE. Residues 494–529 lie on the Extracellular side of the membrane; it reads TKGRSLEEISGEDENQNETKMKGRPVSGGHQDDGWD. The interval 500–529 is disordered; sequence EEISGEDENQNETKMKGRPVSGGHQDDGWD. Asparagine 510 is a glycosylation site (N-linked (GlcNAc...) asparagine).

Belongs to the major facilitator superfamily. Phosphate:H(+) symporter (TC 2.A.1.9) family. In terms of tissue distribution, expressed at low levels in non-mycorrhized roots.

Its subcellular location is the cell membrane. The enzyme catalyses phosphate(in) + H(+)(in) = phosphate(out) + H(+)(out). In terms of biological role, low-affinity transporter for external inorganic phosphate (Pi) probably involved in the acquisition of phosphate released by arbuscular mycorrhizal (AM) fungi during AM symbiosis. This Petunia hybrida (Petunia) protein is Low affinity inorganic phosphate transporter 5.